Consider the following 532-residue polypeptide: Neutral amino acid transporter A (532 aa).

Methionine 1 carries the N-acetylmethionine modification. The span at methionine 1 to tyrosine 10 shows a compositional bias: polar residues. The disordered stretch occupies residues methionine 1–proline 25. Topologically, residues methionine 1–arginine 41 are cytoplasmic. Residues alanine 14–proline 25 show a composition bias toward low complexity. Helical transmembrane passes span glutamine 42–leucine 62, methionine 88–serine 108, and alanine 119–isoleucine 139. Residues lysine 140–threonine 216 are Extracellular-facing. Asparagine 201 and asparagine 206 each carry an N-linked (GlcNAc...) asparagine glycan. 6 helical membrane passes run glutamate 217–leucine 237, alanine 257–valine 277, isoleucine 298–phenylalanine 318, phenylalanine 328–threonine 348, isoleucine 373–isoleucine 393, and valine 418–isoleucine 438. Residues cysteine 500–leucine 532 form a disordered region. Residues serine 507, serine 527, and serine 530 each carry the phosphoserine modification.

Belongs to the dicarboxylate/amino acid:cation symporter (DAACS) (TC 2.A.23) family. SLC1A4 subfamily. As to expression, expressed mostly in brain, muscle, and pancreas but detected in all tissues examined.

Its subcellular location is the membrane. It localises to the melanosome. It carries out the reaction L-threonine(in) + Na(+)(in) = L-threonine(out) + Na(+)(out). It catalyses the reaction L-serine(in) + Na(+)(in) = L-serine(out) + Na(+)(out). The enzyme catalyses L-cysteine(in) + Na(+)(in) = L-cysteine(out) + Na(+)(out). The catalysed reaction is L-alanine(in) + Na(+)(in) = L-alanine(out) + Na(+)(out). It carries out the reaction L-proline(in) + Na(+)(in) = L-proline(out) + Na(+)(out). It catalyses the reaction 4-hydroxy-L-proline(in) + Na(+)(in) = 4-hydroxy-L-proline(out) + Na(+)(out). In terms of biological role, sodium-dependent neutral amino-acid transporter that mediates transport of alanine, serine, cysteine, proline, hydroxyproline and threonine. This Homo sapiens (Human) protein is Neutral amino acid transporter A.